The following is a 365-amino-acid chain: Peptide chain release factor 2 (365 aa).

An N5-methylglutamine modification is found at Q252.

It belongs to the prokaryotic/mitochondrial release factor family. Methylated by PrmC. Methylation increases the termination efficiency of RF2.

The protein localises to the cytoplasm. Peptide chain release factor 2 directs the termination of translation in response to the peptide chain termination codons UGA and UAA. This Shewanella woodyi (strain ATCC 51908 / MS32) protein is Peptide chain release factor 2.